Here is a 428-residue protein sequence, read N- to C-terminus: Maltoporin (428 aa).

Positions 1 to 21 are cleaved as a signal peptide; the sequence is MKKTLLAVAIGGAMFATSAAA.

Belongs to the porin LamB (TC 1.B.3) family. In terms of assembly, homotrimer formed of three 18-stranded antiparallel beta-barrels, containing three independent channels.

Its subcellular location is the cell outer membrane. It carries out the reaction beta-maltose(in) = beta-maltose(out). Its function is as follows. Involved in the transport of maltose and maltodextrins. This chain is Maltoporin, found in Mannheimia succiniciproducens (strain KCTC 0769BP / MBEL55E).